A 177-amino-acid polypeptide reads, in one-letter code: MRAKGLLKEYEVVGRKLPSEKEPQTPLYKMRIFAPDNIVAKSRFWYFLRQLKKFKKTTGEIVSIKQVYETSPVKIKNFGIWLRYDSRSGTHNMYREYRDLTVGGAVTQCYRDMGARHRARAHSIQIIKVDSIPAAKTRRVHVKQFHDSKIKFPLVQRVHHKGNRKLFSFRKPRTYFQ.

It belongs to the eukaryotic ribosomal protein eL20 family.

In Drosophila melanogaster (Fruit fly), this protein is Large ribosomal subunit protein eL20 (RpL18A).